The chain runs to 215 residues: Large ribosomal subunit protein uL3 (215 aa).

The segment at 136-155 (GVSISHRSHGSTGQRQDPGK) is disordered. Position 151 is an N5-methylglutamine (Gln-151).

The protein belongs to the universal ribosomal protein uL3 family. In terms of assembly, part of the 50S ribosomal subunit. Forms a cluster with proteins L14 and L19. Post-translationally, methylated by PrmB.

In terms of biological role, one of the primary rRNA binding proteins, it binds directly near the 3'-end of the 23S rRNA, where it nucleates assembly of the 50S subunit. This Rickettsia africae (strain ESF-5) protein is Large ribosomal subunit protein uL3.